Reading from the N-terminus, the 727-residue chain is ATP-dependent zinc metalloprotease FtsH (727 aa).

Residues 1 to 6 (MQKAFR) are Cytoplasmic-facing. The helical transmembrane segment at 7–27 (NVLVIAIIGVIIFGVFSYING) threads the bilayer. The Extracellular portion of the chain corresponds to 28–110 (NGNTPKQLSY…KVKEEEKQSV (83 aa)). Residues 111–131 (FVSMLTTLIPVLIIAFLFIFF) traverse the membrane as a helical segment. Over 132–727 (LSQAQGGGGG…PNDPNNPSNR (596 aa)) the chain is Cytoplasmic. Residue 205–212 (GPPGTGKT) coordinates ATP. Histidine 427 provides a ligand contact to Zn(2+). Glutamate 428 is a catalytic residue. Residues histidine 431 and aspartate 503 each coordinate Zn(2+). 2 stretches are compositionally biased toward basic and acidic residues: residues 645-684 (LEEGKEDMREDRKEDNDMNRERRHRQRDDRDNQTGHDQLR) and 691-706 (NDQHRGHSNNEEDTGH). A disordered region spans residues 645 to 727 (LEEGKEDMRE…PNDPNNPSNR (83 aa)). Positions 710–727 (PNIDKPYNPNDPNNPSNR) are enriched in low complexity.

The protein in the central section; belongs to the AAA ATPase family. In the C-terminal section; belongs to the peptidase M41 family. In terms of assembly, homohexamer. It depends on Zn(2+) as a cofactor.

Its subcellular location is the cell membrane. In terms of biological role, acts as a processive, ATP-dependent zinc metallopeptidase for both cytoplasmic and membrane proteins. Plays a role in the quality control of integral membrane proteins. In Staphylococcus haemolyticus (strain JCSC1435), this protein is ATP-dependent zinc metalloprotease FtsH.